A 322-amino-acid polypeptide reads, in one-letter code: Phosphatidylserine decarboxylase proenzyme (322 aa).

Active-site charge relay system; for autoendoproteolytic cleavage activity residues include Asp90, His147, and Ser254. Catalysis depends on Ser254, which acts as the Schiff-base intermediate with substrate; via pyruvic acid; for decarboxylase activity. Ser254 bears the Pyruvic acid (Ser); by autocatalysis mark.

The protein belongs to the phosphatidylserine decarboxylase family. PSD-B subfamily. Prokaryotic type I sub-subfamily. Heterodimer of a large membrane-associated beta subunit and a small pyruvoyl-containing alpha subunit. Pyruvate is required as a cofactor. Is synthesized initially as an inactive proenzyme. Formation of the active enzyme involves a self-maturation process in which the active site pyruvoyl group is generated from an internal serine residue via an autocatalytic post-translational modification. Two non-identical subunits are generated from the proenzyme in this reaction, and the pyruvate is formed at the N-terminus of the alpha chain, which is derived from the carboxyl end of the proenzyme. The autoendoproteolytic cleavage occurs by a canonical serine protease mechanism, in which the side chain hydroxyl group of the serine supplies its oxygen atom to form the C-terminus of the beta chain, while the remainder of the serine residue undergoes an oxidative deamination to produce ammonia and the pyruvoyl prosthetic group on the alpha chain. During this reaction, the Ser that is part of the protease active site of the proenzyme becomes the pyruvoyl prosthetic group, which constitutes an essential element of the active site of the mature decarboxylase.

It is found in the cell membrane. The enzyme catalyses a 1,2-diacyl-sn-glycero-3-phospho-L-serine + H(+) = a 1,2-diacyl-sn-glycero-3-phosphoethanolamine + CO2. Its pathway is phospholipid metabolism; phosphatidylethanolamine biosynthesis; phosphatidylethanolamine from CDP-diacylglycerol: step 2/2. Its function is as follows. Catalyzes the formation of phosphatidylethanolamine (PtdEtn) from phosphatidylserine (PtdSer). This Shigella dysenteriae serotype 1 (strain Sd197) protein is Phosphatidylserine decarboxylase proenzyme.